Reading from the N-terminus, the 272-residue chain is Phosphate import ATP-binding protein PstB (272 aa).

Positions 26-267 (IVVKNWNLYY…PQVKRTEDYI (242 aa)) constitute an ABC transporter domain. Residue 58–65 (GPSGCGKS) participates in ATP binding.

The protein belongs to the ABC transporter superfamily. Phosphate importer (TC 3.A.1.7) family. In terms of assembly, the complex is composed of two ATP-binding proteins (PstB), two transmembrane proteins (PstC and PstA) and a solute-binding protein (PstS).

The protein localises to the cell inner membrane. The catalysed reaction is phosphate(out) + ATP + H2O = ADP + 2 phosphate(in) + H(+). In terms of biological role, part of the ABC transporter complex PstSACB involved in phosphate import. Responsible for energy coupling to the transport system. The sequence is that of Phosphate import ATP-binding protein PstB from Hydrogenovibrio crunogenus (strain DSM 25203 / XCL-2) (Thiomicrospira crunogena).